The chain runs to 422 residues: L-2-hydroxyglutarate dehydrogenase (422 aa).

It belongs to the L2HGDH family. The cofactor is FAD.

The protein localises to the cell inner membrane. It carries out the reaction (S)-2-hydroxyglutarate + a quinone = a quinol + 2-oxoglutarate. Its pathway is amino-acid degradation. Functionally, catalyzes the dehydrogenation of L-2-hydroxyglutarate (L2HG) to alpha-ketoglutarate and couples to the respiratory chain by feeding electrons from the reaction into the membrane quinone pool. Functions in a L-lysine degradation pathway that proceeds via cadaverine, glutarate and L-2-hydroxyglutarate. This is L-2-hydroxyglutarate dehydrogenase from Escherichia coli (strain K12).